Consider the following 752-residue polypeptide: Two pore channel protein 2 (752 aa).

Topologically, residues 1-84 (MAEPQAESEP…RRYYSNVCQR (84 aa)) are cytoplasmic. A helical transmembrane segment spans residues 85 to 105 (TLSFTIFLILFLAFIETPSSL). Residues 106–127 (TSTADVRYRAAPWEPPCGLTES) lie on the Extracellular side of the membrane. A helical transmembrane segment spans residues 128 to 148 (VEVLCLLVFAADLSVKGYLFG). Residues 149 to 155 (WAHFQKN) are Cytoplasmic-facing. The chain crosses the membrane as a helical span at residues 156–176 (LWLLGYLVVLVVSLVDWTVSL). Residues 177 to 183 (SLVCHEP) are Extracellular-facing. Residues 184-204 (LRIRRLLRPFFLLQNSSMMKK) traverse the membrane as a helical segment. Residues 203–207 (KKTLK) are interaction with phosphatidylinositol 3,5-bisphosphate. Residues 205–218 (TLKCIRWSLPEMAS) lie on the Cytoplasmic side of the membrane. A helical membrane pass occupies residues 219–239 (VGLLLAIHLCLFTMFGMLLFA). Residues 240 to 254 (GGKQDDGQDRERLTY) lie on the Extracellular side of the membrane. An intramembrane region (helical; Pore-forming) is located at residues 255 to 279 (FQNLPESLTSLLVLLTTANNPDVMI). Over 280 to 289 (PAYSKNRAYA) the chain is Extracellular. The chain crosses the membrane as a helical span at residues 290-310 (IFFIVFTVIGSLFLMNLLTAI). Residues 311 to 436 (IYSQFRGYLM…FLFGHYYFDY (126 aa)) lie on the Cytoplasmic side of the membrane. A helical transmembrane segment spans residues 437 to 459 (LGNLIALANLVSICVFLVLDADV). Topologically, residues 460 to 465 (LPAERD) are extracellular. Residues 466 to 486 (DFILGILNCVFIVYYLLEMLL) traverse the membrane as a helical segment. The Cytoplasmic portion of the chain corresponds to 487–502 (KVFALGLRGYLSYPSN). A helical membrane pass occupies residues 503–523 (VFDGLLTVVLLVLEISTLAVY). At 524–554 (RLPHPGWRPEMVGLLSLWDMTRMLNMLIVFR) the chain is on the extracellular side. Residues 555-575 (FLRIIPSMKLMAVVASTVLGL) traverse the membrane as a helical segment. Over 576 to 580 (VQNMR) the chain is Cytoplasmic. A helical membrane pass occupies residues 581–601 (AFGGILVVVYYVFAIIGINLF). Topologically, residues 602-635 (RGVIVALPGNSSLAPANGSAPCGSFEQLEYWANN) are extracellular. Residues asparagine 611 and asparagine 618 are each glycosylated (N-linked (GlcNAc...) asparagine). Residues 636 to 658 (FDDFAAALVTLWNLMVVNNWQVF) constitute an intramembrane region (helical; Pore-forming). Over 659–673 (LDAYRRYSGPWSKIY) the chain is Extracellular. The helical transmembrane segment at 674-694 (FVLWWLVSSVIWVNLFLALIL) threads the bilayer. Topologically, residues 695–752 (ENFLHKWDPRSHLQPLAGTPEATYQMTVELLFRDILEEPGEDELTERLSQHPHLWLCR) are cytoplasmic.

This sequence belongs to the calcium channel alpha-1 subunit (TC 1.A.1.11) family. Two pore calcium channel subfamily. As to quaternary structure, homodimer. Interacts with LRRK2. Interacts with HAX1. Interacts with MTOR; the interaction is required for TPCN2 ATP sensitivity. Found in a complex with LSM12, TPCN1 and TPCN2. Interacts with LSM12. In terms of processing, N-glycosylated. As to expression, widely expressed. Expressed at high level in liver and kidney.

It localises to the late endosome membrane. It is found in the lysosome membrane. The protein localises to the melanosome membrane. It carries out the reaction Na(+)(in) = Na(+)(out). The catalysed reaction is Ca(2+)(in) = Ca(2+)(out). With respect to regulation, regulated by Mg(2+) ions, cytosolic Mg(2+) selectively inhibits outward current while lysosomal Mg(2+) modestly inhibits both the outward and inward currents. In the absence of Mg(2+), NAADP readily activates TPCN2, with properties similar to PI(3,5)P2. Na(+) current is inhibited by ATP in a MTORC-dependent manner. ATP sensitivity is independent of PI(3,5)P2. Both current elicited by PI(3,5)P2 as well as NAADP are inhibited by tetrandrine. Functionally, intracellular channel initially characterized as a non-selective Ca(2+)-permeable channel activated by NAADP (nicotinic acid adenine dinucleotide phosphate), it is also a highly-selective Na(+) channel activated directly by PI(3,5)P2 (phosphatidylinositol 3,5-bisphosphate). Localizes to the lysosomal and late endosome membranes where it regulates organellar membrane excitability, membrane trafficking, and pH homeostasis. Is associated with a plethora of physiological processes, including mTOR-dependent nutrient sensing, skin pigmentation and autophagy. Ion selectivity is not fixed but rather agonist-dependent and under defined ionic conditions, can be readily activated by both NAADP and PI(3,5)P2. As calcium channel, it increases the pH in the lysosomal lumen, as sodium channel, it promotes lysosomal exocytosis. Plays a crucial role in endolysosomal trafficking in the endolysosomal degradation pathway and is potentially involved in the homeostatic control of many macromolecules and cell metabolites. Also expressed in melanosomes of pigmented cells where mediates a Ca(2+) channel and/or PI(3,5)P2-activated melanosomal Na(+) channel to acidify pH and inhibit tyrosinase activity required for melanogenesis and pigmentation. Unlike the voltage-dependent TPCN1, TPCN2 is voltage independent and can be activated solely by PI(3,5)P2 binding. In contrast, PI(4,5)P2, PI(3,4)P2, PI(3)P and PI(5)P have no obvious effect on channel activation. Its function is as follows. (Microbial infection) During Ebola virus (EBOV) infection, controls the movement of endosomes containing virus particles and is required by EBOV to escape from the endosomal network into the cell cytoplasm. (Microbial infection) Required for cell entry of coronaviruses SARS-CoV and SARS-CoV-2, as well as human coronavirus EMC (HCoV-EMC), by endocytosis. This is Two pore channel protein 2 from Homo sapiens (Human).